The primary structure comprises 270 residues: Putative methylsterol monooxygenase DDB_G0269788 (270 aa).

The next 3 membrane-spanning stretches (helical) occupy residues 31-51 (FIAH…CDFM), 82-102 (IFVQ…IGLS), and 110-130 (IPYL…YFYW). Residues 118–249 (ACCFLIEDFY…FTYLDKIFGT (132 aa)) enclose the Fatty acid hydroxylase domain. The Histidine box-1 signature appears at 132–136 (HRALH). Residues 145 to 149 (HKVHH) carry the Histidine box-2 motif. The Histidine box-3 motif lies at 224 to 230 (FHDFHHE).

The protein belongs to the sterol desaturase family. It depends on Fe cation as a cofactor.

The protein resides in the endoplasmic reticulum membrane. The catalysed reaction is 4,4-dimethyl-5alpha-cholest-7-en-3beta-ol + 6 Fe(II)-[cytochrome b5] + 3 O2 + 5 H(+) = 4alpha-carboxy-4beta-methyl-5alpha-cholest-7-ene-3beta-ol + 6 Fe(III)-[cytochrome b5] + 4 H2O. It functions in the pathway steroid biosynthesis; zymosterol biosynthesis; zymosterol from lanosterol: step 3/6. This is Putative methylsterol monooxygenase DDB_G0269788 from Dictyostelium discoideum (Social amoeba).